The chain runs to 861 residues: Probable beta-glucosidase A (861 aa).

An N-terminal signal peptide occupies residues methionine 1–alanine 19. Residues asparagine 62, asparagine 212, and asparagine 253 are each glycosylated (N-linked (GlcNAc...) asparagine). Residue aspartate 281 is part of the active site. Asparagine 316, asparagine 323, asparagine 355, asparagine 443, asparagine 524, asparagine 543, asparagine 565, asparagine 669, asparagine 713, and asparagine 846 each carry an N-linked (GlcNAc...) asparagine glycan.

The protein belongs to the glycosyl hydrolase 3 family.

Its subcellular location is the secreted. It catalyses the reaction Hydrolysis of terminal, non-reducing beta-D-glucosyl residues with release of beta-D-glucose.. It participates in glycan metabolism; cellulose degradation. Its function is as follows. Beta-glucosidases are one of a number of cellulolytic enzymes involved in the degradation of cellulosic biomass. Catalyzes the last step releasing glucose from the inhibitory cellobiose. The polypeptide is Probable beta-glucosidase A (bglA) (Aspergillus flavus (strain ATCC 200026 / FGSC A1120 / IAM 13836 / NRRL 3357 / JCM 12722 / SRRC 167)).